Reading from the N-terminus, the 338-residue chain is Nicotinate-nucleotide--dimethylbenzimidazole phosphoribosyltransferase (338 aa).

The active-site Proton acceptor is glutamate 305.

It belongs to the CobT family.

The enzyme catalyses 5,6-dimethylbenzimidazole + nicotinate beta-D-ribonucleotide = alpha-ribazole 5'-phosphate + nicotinate + H(+). Its pathway is nucleoside biosynthesis; alpha-ribazole biosynthesis; alpha-ribazole from 5,6-dimethylbenzimidazole: step 1/2. Catalyzes the synthesis of alpha-ribazole-5'-phosphate from nicotinate mononucleotide (NAMN) and 5,6-dimethylbenzimidazole (DMB). The protein is Nicotinate-nucleotide--dimethylbenzimidazole phosphoribosyltransferase of Novosphingobium aromaticivorans (strain ATCC 700278 / DSM 12444 / CCUG 56034 / CIP 105152 / NBRC 16084 / F199).